An 84-amino-acid chain; its full sequence is Small ribosomal subunit protein bS18 (84 aa).

The protein belongs to the bacterial ribosomal protein bS18 family. Part of the 30S ribosomal subunit. Forms a tight heterodimer with protein bS6.

Binds as a heterodimer with protein bS6 to the central domain of the 16S rRNA, where it helps stabilize the platform of the 30S subunit. This is Small ribosomal subunit protein bS18 from Vesicomyosocius okutanii subsp. Calyptogena okutanii (strain HA).